The following is a 100-amino-acid chain: UPF0235 protein NE0395 (100 aa).

The protein belongs to the UPF0235 family.

The polypeptide is UPF0235 protein NE0395 (Nitrosomonas europaea (strain ATCC 19718 / CIP 103999 / KCTC 2705 / NBRC 14298)).